The primary structure comprises 115 residues: U3-lycotoxin-Ls1a (115 aa).

A signal peptide spans 1–20 (MKFVLLFGVLLVTLFSYSSA). Residues 21–44 (EMLDDFDQAVEDELLSLIEKEEAR) constitute a propeptide that is removed on maturation. 4 disulfides stabilise this stretch: Cys48–Cys63, Cys55–Cys72, Cys62–Cys87, and Cys74–Cys85.

It belongs to the neurotoxin 19 (CSTX) family. 01 subfamily. As to expression, expressed by the venom gland.

The protein localises to the secreted. This is U3-lycotoxin-Ls1a from Lycosa singoriensis (Wolf spider).